Reading from the N-terminus, the 383-residue chain is Paralemmin-1 (383 aa).

An N-acetylmethionine modification is found at Met-1. Positions 7-101 (DTVSQQERLQ…EKEIDVLEFG (95 aa)) form a coiled coil. Disordered stretches follow at residues 51–164 (RERW…STMM), 242–293 (TLSE…QPGQ), and 333–374 (SVTP…DMKK). Basic and acidic residues predominate over residues 69-96 (DMRKQMQEDEQKARSLEESITRLEKEID). A phosphoserine mark is found at Ser-116, Ser-122, and Ser-124. Polar residues predominate over residues 133-143 (ETMVNAQQTPL). 3 positions are modified to phosphothreonine: Thr-141, Thr-145, and Thr-153. Phosphoserine occurs at positions 157 and 161. Phosphothreonine is present on Thr-242. Ser-244 bears the Phosphoserine mark. Positions 257–273 (GLAEDVTRTTPSRREIT) are enriched in basic and acidic residues. Phosphoserine is present on Ser-345. The segment covering 357 to 367 (QTGPTTTPSDT) has biased composition (polar residues). Residues Thr-361, Thr-362, and Thr-363 each carry the phosphothreonine modification. Ser-365 is modified (phosphoserine). The residue at position 367 (Thr-367) is a Phosphothreonine. S-palmitoyl cysteine attachment occurs at residues Cys-377 and Cys-379. Cys-380 is modified (cysteine methyl ester). A lipid anchor (S-farnesyl cysteine) is attached at Cys-380. Residues 381–383 (SVM) constitute a propeptide, removed in mature form.

The protein belongs to the paralemmin family. As to quaternary structure, interacts with dopamine receptor DRD3. Expressed in neurons cells of neuropil-rich areas of the brain, in the Purkinje cells of the cerebellum, in cells of the cerebral cortex, hippocampus, brainstem nuclei and glial processes and sheaths. Expressed in the medulla of the adrenal chromaffin cells and renal duct cells (at protein level).

The protein localises to the cell membrane. The protein resides in the cell projection. Its subcellular location is the filopodium membrane. It is found in the axon. It localises to the dendrite. The protein localises to the dendritic spine. The protein resides in the basolateral cell membrane. Its subcellular location is the apicolateral cell membrane. Involved in plasma membrane dynamics and cell process formation. Necessary for axonal and dendritic filopodia induction, for dendritic spine maturation and synapse formation in a palmitoylation-dependent manner. This is Paralemmin-1 (Palm) from Rattus norvegicus (Rat).